Consider the following 224-residue polypeptide: Pleckstrin homology domain-containing family B member 2 (224 aa).

A PH domain is found at 2–109; sequence AFVKSGWLLR…WKIALQDART (108 aa). Lysine 20 serves as a coordination point for a 1,2-diacyl-sn-glycero-3-phospho-L-serine.

Its subcellular location is the recycling endosome membrane. Functionally, involved in retrograde transport of recycling endosomes. The sequence is that of Pleckstrin homology domain-containing family B member 2 (PLEKHB2) from Gallus gallus (Chicken).